Here is a 474-residue protein sequence, read N- to C-terminus: Gamma-aminobutyric acid receptor subunit beta-1 (474 aa).

Positions 1–25 are cleaved as a signal peptide; it reads MWTVQNRESLGLLSFPVMITMVCCA. Residues 26–245 lie on the Extracellular side of the membrane; it reads HSTNEPSNMS…SFRLKRNIGY (220 aa). An N-linked (GlcNAc...) asparagine glycan is attached at asparagine 105. Tyrosine 122 contacts histamine. A disulfide bond links cysteine 161 and cysteine 175. Asparagine 174 carries an N-linked (GlcNAc...) asparagine glycan. Residues 181 to 182 and threonine 227 contribute to the histamine site; that span reads SY. 4-aminobutanoate contacts are provided by tyrosine 182 and threonine 227. Helical transmembrane passes span 246-267, 271-293, and 305-327; these read FILQTYMPSTLITILSWVSFWI, ASAARVALGITTVLTMTTISTHL, and AIDIYLMGCFVFVFLALLEYAFV. Residues 328-451 lie on the Cytoplasmic side of the membrane; it reads NYIFFGKGPQ…DLTDVNSIDK (124 aa). A helical membrane pass occupies residues 452–473; it reads WSRMFFPITFSLFNVVYWLYYV.

This sequence belongs to the ligand-gated ion channel (TC 1.A.9) family. Gamma-aminobutyric acid receptor (TC 1.A.9.5) subfamily. GABRB1 sub-subfamily. As to quaternary structure, heteropentamer, formed by a combination of alpha (GABRA1-6), beta (GABRB1-3), gamma (GABRG1-3), delta (GABRD), epsilon (GABRE), rho (GABRR1-3), pi (GABRP) and theta (GABRQ) chains, each subunit exhibiting distinct physiological and pharmacological properties. Binds UBQLN1.

It localises to the postsynaptic cell membrane. Its subcellular location is the cell membrane. The catalysed reaction is chloride(in) = chloride(out). With respect to regulation, potentiated by etomidate, propofol, pregnanolone and flurazepam. Potentiated by histamine. In terms of biological role, beta subunit of the heteropentameric ligand-gated chloride channel gated by gamma-aminobutyric acid (GABA), a major inhibitory neurotransmitter in the brain. GABA-gated chloride channels, also named GABA(A) receptors (GABAAR), consist of five subunits arranged around a central pore and contain one or two GABA active binding sites located at the alpha and beta subunit interfaces, depending on subunit composition. When activated by GABA, GABAARs selectively allow the flow of chloride anions across the cell membrane down their electrochemical gradient. Chloride influx into the postsynaptic neuron following GABAAR opening decreases the neuron ability to generate a new action potential, thereby reducing nerve transmission. Beta-containing GABAARs can simultaneously bind GABA and histamine where histamine binds at the interface of two neighboring beta subunits, which may be involved in the regulation of sleep and wakefulness. In Homo sapiens (Human), this protein is Gamma-aminobutyric acid receptor subunit beta-1.